A 228-amino-acid chain; its full sequence is Cytochrome c oxidase subunit 2 (228 aa).

Over 1-26 (MSTWANLGLQDSASPLMEQLIFFHDH) the chain is Mitochondrial intermembrane. The helical transmembrane segment at 27 to 48 (ALLILVMITVLVGYLMFMLFFN) threads the bilayer. Topologically, residues 49–62 (NYVNRFLLHGQLIE) are mitochondrial matrix. Residues 63 to 82 (MIWTILPAIILLFIALPSLR) traverse the membrane as a helical segment. The Mitochondrial intermembrane portion of the chain corresponds to 83–228 (LLYLLDEINE…FIKWISSNNS (146 aa)). Cu cation contacts are provided by histidine 161, cysteine 196, glutamate 198, cysteine 200, histidine 204, and methionine 207. Mg(2+) is bound at residue glutamate 198.

Belongs to the cytochrome c oxidase subunit 2 family. As to quaternary structure, component of the cytochrome c oxidase (complex IV, CIV), a multisubunit enzyme composed of a catalytic core of 3 subunits and several supernumerary subunits. The complex exists as a monomer or a dimer and forms supercomplexes (SCs) in the inner mitochondrial membrane with ubiquinol-cytochrome c oxidoreductase (cytochrome b-c1 complex, complex III, CIII). Cu cation is required as a cofactor.

It is found in the mitochondrion inner membrane. The catalysed reaction is 4 Fe(II)-[cytochrome c] + O2 + 8 H(+)(in) = 4 Fe(III)-[cytochrome c] + 2 H2O + 4 H(+)(out). Component of the cytochrome c oxidase, the last enzyme in the mitochondrial electron transport chain which drives oxidative phosphorylation. The respiratory chain contains 3 multisubunit complexes succinate dehydrogenase (complex II, CII), ubiquinol-cytochrome c oxidoreductase (cytochrome b-c1 complex, complex III, CIII) and cytochrome c oxidase (complex IV, CIV), that cooperate to transfer electrons derived from NADH and succinate to molecular oxygen, creating an electrochemical gradient over the inner membrane that drives transmembrane transport and the ATP synthase. Cytochrome c oxidase is the component of the respiratory chain that catalyzes the reduction of oxygen to water. Electrons originating from reduced cytochrome c in the intermembrane space (IMS) are transferred via the dinuclear copper A center (CU(A)) of subunit 2 and heme A of subunit 1 to the active site in subunit 1, a binuclear center (BNC) formed by heme A3 and copper B (CU(B)). The BNC reduces molecular oxygen to 2 water molecules using 4 electrons from cytochrome c in the IMS and 4 protons from the mitochondrial matrix. This chain is Cytochrome c oxidase subunit 2 (mt:CoII), found in Drosophila yakuba (Fruit fly).